Here is a 151-residue protein sequence, read N- to C-terminus: GTP-dependent dephospho-CoA kinase (151 aa).

The GTP site is built by Asp-30, Val-31, Asp-49, Lys-51, and Glu-104.

Belongs to the GTP-dependent DPCK family.

The enzyme catalyses 3'-dephospho-CoA + GTP = GDP + CoA + H(+). It participates in cofactor biosynthesis; coenzyme A biosynthesis. Functionally, catalyzes the GTP-dependent phosphorylation of the 3'-hydroxyl group of dephosphocoenzyme A to form coenzyme A (CoA). The sequence is that of GTP-dependent dephospho-CoA kinase from Cenarchaeum symbiosum (strain A).